The chain runs to 517 residues: Nectin-1 (517 aa).

An N-terminal signal peptide occupies residues 1 to 30; that stretch reads MARMGLAGAAGRWWGLALGLTAFFLPGVHS. In terms of domain architecture, Ig-like V-type spans 31 to 141; it reads QVVQVNDSMY…GNRESQLNLT (111 aa). The Extracellular segment spans residues 31-355; it reads QVVQVNDSMY…GRRAGPVPTA (325 aa). Residues Asn-36, Asn-72, and Asn-139 are each glycosylated (N-linked (GlcNAc...) asparagine). An intrachain disulfide couples Cys-51 to Cys-124. Ig-like C2-type domains follow at residues 149-238 and 247-334; these read WIEG…FKES and PEVT…VNIT. 2 cysteine pairs are disulfide-bonded: Cys-172–Cys-226 and Cys-269–Cys-316. The N-linked (GlcNAc...) (complex) asparagine glycan is linked to Asn-202. An interaction with FGFR region spans residues 282–299; the sequence is WTTLNGSLPKGVEAQNRT. Asn-286, Asn-297, Asn-307, and Asn-332 each carry an N-linked (GlcNAc...) asparagine glycan. A helical membrane pass occupies residues 356 to 376; that stretch reads IIGGVAGSILLVLIVVGGIVV. The Cytoplasmic segment spans residues 377 to 517; that stretch reads ALRRRRHTFK…SFISKKEWYV (141 aa). Residues 399–488 are disordered; sequence GYSKAGIPQH…DGYGDRTLGY (90 aa). A phosphoserine mark is found at Ser-422, Ser-434, and Ser-435. Residue Tyr-436 is modified to Phosphotyrosine. A compositionally biased stretch (acidic residues) spans 436 to 445; sequence YEEEEEEEEG. The segment covering 449–466 has biased composition (basic and acidic residues); the sequence is GERKVGGPHPKYDEDAKR. Ser-511 is subject to Phosphoserine.

Belongs to the nectin family. In terms of assembly, cis- and trans-homodimer. Can form trans-heterodimers with NECTIN3 and with NECTIN4. Interaction between NECTIN1 and NECTIN3 on the pre- and postsynaptic sites, respectively, initiates the formation of puncta adherentia junctions between axons and dendrites. Interacts (via cytoplasmic domain) with AFDN (via PDZ domain); this interaction recruits NECTIN1 to cadherin-based adherens junctions and provides a connection with the actin cytoskeleton. Interacts with integrin alphaV/beta3. Interacts (via Ig-like C2-type domain 2) with FGFR1, FGFR2 and FGFR3. (Microbial infection) Interacts with herpes simplex virus 1/HHV-1, herpes simplex virus 2/HHV-2, and pseudorabies virus/PRV envelope glycoprotein D. (Microbial infection) Ubiquitinated by CBL following infection by herpes simplex virus 1/HHV-1 and association with HHV-1 envelope glycoprotein D, leading to its removal from cell surface.

It localises to the cell membrane. Its subcellular location is the cell junction. It is found in the adherens junction. The protein localises to the presynaptic cell membrane. The protein resides in the secreted. Cell adhesion molecule that promotes cell-cell contacts and plays important roles in the development of the nervous system. Acts by forming homophilic or heterophilic trans-dimers. Heterophilic interactions have been detected between NECTIN1 and NECTIN3 and between NECTIN1 and NECTIN4. Involved in axon guidance by promoting contacts between the commissural axons and the floor plate cells. Involved in synaptogegesis. Has some neurite outgrowth-promoting activity. Promotes formation of checkerboard-like cellular pattern of hair cells and supporting cells in the auditory epithelium via heterophilic interaction with NECTIN3: NECTIN1 is present in the membrane of hair cells and associates with NECTIN3 on supporting cells, thereby mediating heterotypic adhesion between these two cell types. Required for enamel mineralization. Its function is as follows. (Microbial infection) Acts as a receptor for herpes simplex virus 1/HHV-1, herpes simplex virus 2/HHV-2, and pseudorabies virus/PRV. Constitutes the major receptor for herpes simplex virus 1/HHV-1 entry into host cells. The sequence is that of Nectin-1 from Homo sapiens (Human).